The primary structure comprises 444 residues: Putative methylesterase 13, chloroplastic (444 aa).

Disordered regions lie at residues 1 to 32 (MGNS…KYKY), 49 to 90 (PSLS…KDSH), and 124 to 176 (SVVY…QLVD). The N-terminal 60 residues, 1–60 (MGNSFTCISHEQEQRPKKSSGGGGNNSGKYKYVRRLSLMPSFRRRTLLPSLSCSGSSSTS), are a transit peptide targeting the chloroplast. Positions 49-64 (PSLSCSGSSSTSSSKK) are enriched in low complexity. Residues 65–82 (GGIKAKTKKIRERHHHHH) are compositionally biased toward basic residues. The span at 124 to 148 (SVVYPSAQPSGTSSGPVSAVQTPKK) shows a compositional bias: polar residues. A compositionally biased stretch (low complexity) spans 149-164 (SSAGFVRSSSSRQRSS). The 121-residue stretch at 190–310 (FVLVHGGGFG…LFNQQLGSND (121 aa)) folds into the AB hydrolase-1 domain. Catalysis depends on aspartate 264, which acts as the Acyl-ester intermediate. Active-site charge relay system residues include aspartate 390 and histidine 418.

The protein belongs to the AB hydrolase superfamily. Methylesterase family.

The protein resides in the plastid. The protein localises to the chloroplast. Functionally, putative methylesterase. This is Putative methylesterase 13, chloroplastic from Arabidopsis thaliana (Mouse-ear cress).